Here is an 875-residue protein sequence, read N- to C-terminus: Cell surface glycoprotein (875 aa).

Residues 1–23 form the signal peptide; that stretch reads MTNTKQKINAVFLSALMVMSVFA. The segment covering 137-157 has biased composition (polar residues); it reads EVQNGGSGDVTGSTLQTSSSG. Disordered regions lie at residues 137–158 and 197–217; these read EVQNGGSGDVTGSTLQTSSSGP and LPTADRNNDNGASGSNGDFDV. A compositionally biased stretch (low complexity) spans 205–216; sequence DNGASGSNGDFD. N253 carries N-linked (GlcNAc...) asparagine glycosylation. The interval 380–414 is disordered; sequence YPASDSSNDGYASGGSHASSVTVRDTDGDGTDDSE. The segment covering 383 to 402 has biased composition (polar residues); that stretch reads SDSSNDGYASGGSHASSVTV. 4 N-linked (GlcNAc...) asparagine glycosylation sites follow: N455, N563, N715, and N774. The segment at 794 to 852 is disordered; it reads EAGSLEEEQPDTETPEPDTETPEPDTETPEPDTETPEPDTETPEPDTETEEATTEASGP. Acidic residues predominate over residues 797–846; it reads SLEEEQPDTETPEPDTETPEPDTETPEPDTETPEPDTETPEPDTETEEAT. A helical membrane pass occupies residues 851-875; it reads GPGFTAAIALIALVAAALLAVRRDN. The PGF sorting signal motif lies at 852–854; the sequence is PGF.

The protein belongs to the halobacterial S-layer protein family. Post-translationally, asn-455 is glycosylated by a pentasaccharide comprising a hexose, 2 hexuronic acids, a methyl ester of a hexuronic acid and a final hexose. The complete pentasaccharide is first assembled on dolichol phosphate and then transferred the glycan to the target Asn. In terms of processing, cleaved by the archaeosortase ArtA at the C-terminus, with removal of a short hydrophobic segment. Lipidation.

It localises to the secreted. It is found in the cell wall. The protein localises to the S-layer. Its subcellular location is the cell membrane. S-layer protein. The S-layer is a paracrystalline mono-layered assembly of proteins which coat the surface of the cell. This Haloarcula marismortui (strain ATCC 43049 / DSM 3752 / JCM 8966 / VKM B-1809) (Halobacterium marismortui) protein is Cell surface glycoprotein (csg1).